An 88-amino-acid polypeptide reads, in one-letter code: Small ribosomal subunit protein uS15c (88 aa).

The protein belongs to the universal ribosomal protein uS15 family. In terms of assembly, part of the 30S ribosomal subunit.

The protein localises to the plastid. It is found in the chloroplast. In Nasturtium officinale (Watercress), this protein is Small ribosomal subunit protein uS15c (rps15).